The sequence spans 411 residues: Adenylosuccinate synthetase (411 aa).

GTP is bound by residues 11-17 and 39-41; these read GDEGKGK and GHT. The active-site Proton acceptor is the D12. Residues D12 and G39 each coordinate Mg(2+). Residues 12 to 15, 37 to 40, T121, R135, Q215, T230, and R294 each bind IMP; these read DEGK and NAGH. H40 functions as the Proton donor in the catalytic mechanism. 290–296 contacts substrate; the sequence is TTTKRPR. GTP is bound by residues R296, 322-324, and 400-402; these read KLD and STS.

This sequence belongs to the adenylosuccinate synthetase family. Homodimer. The cofactor is Mg(2+).

Its subcellular location is the cytoplasm. The enzyme catalyses IMP + L-aspartate + GTP = N(6)-(1,2-dicarboxyethyl)-AMP + GDP + phosphate + 2 H(+). It functions in the pathway purine metabolism; AMP biosynthesis via de novo pathway; AMP from IMP: step 1/2. Functionally, plays an important role in the de novo pathway of purine nucleotide biosynthesis. Catalyzes the first committed step in the biosynthesis of AMP from IMP. This Helicobacter pylori (strain Shi470) protein is Adenylosuccinate synthetase.